The following is a 382-amino-acid chain: Methylthioribose-1-phosphate isomerase (382 aa).

D257 acts as the Proton donor in catalysis.

This sequence belongs to the eIF-2B alpha/beta/delta subunits family. MtnA subfamily.

It localises to the cytoplasm. Its subcellular location is the nucleus. It catalyses the reaction 5-(methylsulfanyl)-alpha-D-ribose 1-phosphate = 5-(methylsulfanyl)-D-ribulose 1-phosphate. The protein operates within amino-acid biosynthesis; L-methionine biosynthesis via salvage pathway; L-methionine from S-methyl-5-thio-alpha-D-ribose 1-phosphate: step 1/6. Catalyzes the interconversion of methylthioribose-1-phosphate (MTR-1-P) into methylthioribulose-1-phosphate (MTRu-1-P). The sequence is that of Methylthioribose-1-phosphate isomerase from Paracoccidioides brasiliensis (strain Pb18).